The primary structure comprises 412 residues: Mannose-1-phosphate guanylyltransferase regulatory subunit alpha (412 aa).

The segment at 6-259 (TKAIILVGGP…VGFWRQIKNA (254 aa)) is substrate-binding domain. 2 residues coordinate GDP-alpha-D-mannose: Glu88 and Gln255. The interval 281–412 (LKKGNNIIGN…DRNYNNEIIL (132 aa)) is hexapeptide repeat domain.

It belongs to the transferase hexapeptide repeat family. In terms of assembly, component of the GMPPA-GMPPB mannose-1-phosphate guanylyltransferase complex composed of 4 gmppA subunits and 8 gmppB subunits; the complex is organized into three layers, a central layer made up of 2 gmppA dimers sandwiched between two layers each made up of 2 gmppB dimers.

In terms of biological role, regulatory subunit of the GMPPA-GMPPB mannose-1-phosphate guanylyltransferase complex; reduces the catalytic activity of GMPPB when part of the complex. Mediates allosteric feedback inhibition of GMPPB catalytic activity upon binding GDP-alpha-D-mannose. Together with GMPPB regulates GDP-alpha-D-mannose levels. This is Mannose-1-phosphate guanylyltransferase regulatory subunit alpha (gmppA) from Dictyostelium discoideum (Social amoeba).